Here is a 257-residue protein sequence, read N- to C-terminus: Hydroxyacylglutathione hydrolase (257 aa).

Residues His-56, His-58, Asp-60, His-61, His-112, Asp-131, and His-169 each coordinate Zn(2+).

The protein belongs to the metallo-beta-lactamase superfamily. Glyoxalase II family. In terms of assembly, monomer. The cofactor is Zn(2+).

It carries out the reaction an S-(2-hydroxyacyl)glutathione + H2O = a 2-hydroxy carboxylate + glutathione + H(+). Its pathway is secondary metabolite metabolism; methylglyoxal degradation; (R)-lactate from methylglyoxal: step 2/2. Functionally, thiolesterase that catalyzes the hydrolysis of S-D-lactoyl-glutathione to form glutathione and D-lactic acid. This Ectopseudomonas mendocina (strain ymp) (Pseudomonas mendocina) protein is Hydroxyacylglutathione hydrolase.